Reading from the N-terminus, the 535-residue chain is EH domain-containing protein 3 (535 aa).

Met-1 carries the post-translational modification N-acetylmethionine. The Dynamin-type G domain occupies 55 to 286 (FDNKPMVLLV…DLFRDIQSLP (232 aa)). The tract at residues 65-72 (GQYSTGKT) is G1 motif. Residue 65 to 72 (GQYSTGKT) coordinates ATP. Positions 91–92 (EP) are G2 motif. Positions 153–156 (DTPG) are G3 motif. Positions 198-227 (DEFSEVIKALKNHEDKMRVVLNKADQIETQ) form a coiled coil. The G4 motif stretch occupies residues 219 to 222 (NKAD). Lys-220 contacts ATP. Residue Ile-243 is a region of interest, G5 motif. Trp-258 lines the ATP pocket. Lys-315 is covalently cross-linked (Glycyl lysine isopeptide (Lys-Gly) (interchain with G-Cter in SUMO)). A phosphoserine mark is found at Ser-349 and Ser-456. In terms of domain architecture, EH spans 444 to 532 (DKPMYDEIFY…AHLLPPSKRK (89 aa)). One can recognise an EF-hand domain in the interval 476–511 (LPNSVLGKIWKLADIDKDGMLDDEEFALANHLIKVK). Ca(2+) contacts are provided by Asp-489, Asp-491, Asp-493, Met-495, and Glu-500. Residue Lys-511 forms a Glycyl lysine isopeptide (Lys-Gly) (interchain with G-Cter in SUMO) linkage.

This sequence belongs to the TRAFAC class dynamin-like GTPase superfamily. Dynamin/Fzo/YdjA family. EHD subfamily. Homooligomer. Heterooligomer with EHD1. Heterooligomer with EHD2 and EHD4; ATP-binding is required for heterooligomerization. Interacts with PACSIN1. Interacts with PACSIN2. Interacts (via EH domain) with MICALL1. Interacts (via EH domain) with RAB11FIP2. Interacts with ANK2. Interacts with CACNA1GG and CACNA1H. Strong expression seen in the kidney, brain and liver. In the kidney, expressed exclusively by glomerular endothelial cells; at protein level. Expressed in skeletal muscle neuromuscular junction perisynaptic region; at protein level.

It is found in the recycling endosome membrane. Its subcellular location is the cell membrane. The protein resides in the cell projection. It localises to the cilium membrane. The protein localises to the cytoplasmic vesicle. Its function is as follows. ATP- and membrane-binding protein that controls membrane reorganization/tubulation upon ATP hydrolysis. In vitro causes tubulation of endocytic membranes. Binding to phosphatidic acid induces its membrane tubulation activity. Plays a role in endocytic transport. Involved in early endosome to recycling endosome compartment (ERC), retrograde early endosome to Golgi, and endosome to plasma membrane (rapid recycling) protein transport. Involved in the regulation of Golgi maintenance and morphology. Involved in the recycling of internalized D1 dopamine receptor. Plays a role in cardiac protein trafficking probably implicating ANK2. Involved in the ventricular membrane targeting of SLC8A1 and CACNA1C and probably the atrial membrane localization of CACNA1GG and CACNA1H implicated in the regulation of atrial myocyte excitability and cardiac conduction. In conjunction with EHD4 may be involved in endocytic trafficking of KDR/VEGFR2 implicated in control of glomerular function. Involved in the rapid recycling of integrin beta-3 implicated in cell adhesion maintenance. Involved in the unidirectional retrograde dendritic transport of endocytosed BACE1 and in efficient sorting of BACE1 to axons implicating a function in neuronal APP processing. Plays a role in the formation of the ciliary vesicle, an early step in cilium biogenesis; possibly sharing redundant functions with Ehd1. The polypeptide is EH domain-containing protein 3 (Mus musculus (Mouse)).